Here is a 242-residue protein sequence, read N- to C-terminus: 3-deoxy-manno-octulosonate cytidylyltransferase (242 aa).

Belongs to the KdsB family.

It localises to the cytoplasm. The catalysed reaction is 3-deoxy-alpha-D-manno-oct-2-ulosonate + CTP = CMP-3-deoxy-beta-D-manno-octulosonate + diphosphate. It participates in nucleotide-sugar biosynthesis; CMP-3-deoxy-D-manno-octulosonate biosynthesis; CMP-3-deoxy-D-manno-octulosonate from 3-deoxy-D-manno-octulosonate and CTP: step 1/1. Its pathway is bacterial outer membrane biogenesis; lipopolysaccharide biosynthesis. In terms of biological role, activates KDO (a required 8-carbon sugar) for incorporation into bacterial lipopolysaccharide in Gram-negative bacteria. This Mesorhizobium japonicum (strain LMG 29417 / CECT 9101 / MAFF 303099) (Mesorhizobium loti (strain MAFF 303099)) protein is 3-deoxy-manno-octulosonate cytidylyltransferase.